We begin with the raw amino-acid sequence, 257 residues long: E3 ubiquitin-protein ligase RNF170 (257 aa).

Over 1–24 the chain is Lumenal; that stretch reads MADNQEERPHFPLDEGSIIEGVSD. The helical transmembrane segment at 25–45 threads the bilayer; it reads QVIVVVLLSFVAVGSLIYLLL. Over 46-200 the chain is Cytoplasmic; that stretch reads RNDEQNIHPE…GGLFWMFRIR (155 aa). The segment at 87–130 adopts an RING-type zinc-finger fold; sequence CPVCLQQATFPVETNCGHLFCGSCIIAYWRYGTWLGAINCPICR. Residues 201–221 traverse the membrane as a helical segment; it reads IVLCLLGALLYLVSPLDIIPE. A topological domain (lumenal) is located at residue Ala222. The helical transmembrane segment at 223-243 threads the bilayer; that stretch reads LFGILGFLDDLFVLFLLLIYI. At 244–257 the chain is on the cytoplasmic side; it reads SIMYREVVTQRLYR.

The protein resides in the endoplasmic reticulum membrane. It carries out the reaction S-ubiquitinyl-[E2 ubiquitin-conjugating enzyme]-L-cysteine + [acceptor protein]-L-lysine = [E2 ubiquitin-conjugating enzyme]-L-cysteine + N(6)-ubiquitinyl-[acceptor protein]-L-lysine.. Its pathway is protein modification; protein ubiquitination. E3 ubiquitin-protein ligase that plays an essential role in stimulus-induced inositol 1,4,5-trisphosphate receptor (ITPR) ubiquitination and degradation via the endoplasmic reticulum-associated degradation (ERAD) pathway. Also involved in ITPR turnover in resting cells. This is E3 ubiquitin-protein ligase RNF170 (rnf170) from Xenopus laevis (African clawed frog).